Here is a 379-residue protein sequence, read N- to C-terminus: Elongation factor Ts, mitochondrial (379 aa).

A mitochondrion-targeting transit peptide spans M1–L45.

This sequence belongs to the EF-Ts family.

It localises to the mitochondrion. In terms of biological role, associates with the EF-Tu.GDP complex and induces the exchange of GDP to GTP. It remains bound to the aminoacyl-tRNA.EF-Tu.GTP complex up to the GTP hydrolysis stage on the ribosome. The chain is Elongation factor Ts, mitochondrial from Ricinus communis (Castor bean).